We begin with the raw amino-acid sequence, 165 residues long: 6,7-dimethyl-8-ribityllumazine synthase (165 aa).

5-amino-6-(D-ribitylamino)uracil contacts are provided by residues tyrosine 30, 61 to 63, and 90 to 92; these read ALE and VVI. A (2S)-2-hydroxy-3-oxobutyl phosphate-binding site is contributed by 95–96; that stretch reads ET. Catalysis depends on histidine 98, which acts as the Proton donor. Asparagine 123 is a 5-amino-6-(D-ribitylamino)uracil binding site. Arginine 137 provides a ligand contact to (2S)-2-hydroxy-3-oxobutyl phosphate.

This sequence belongs to the DMRL synthase family.

The catalysed reaction is (2S)-2-hydroxy-3-oxobutyl phosphate + 5-amino-6-(D-ribitylamino)uracil = 6,7-dimethyl-8-(1-D-ribityl)lumazine + phosphate + 2 H2O + H(+). The protein operates within cofactor biosynthesis; riboflavin biosynthesis; riboflavin from 2-hydroxy-3-oxobutyl phosphate and 5-amino-6-(D-ribitylamino)uracil: step 1/2. Functionally, catalyzes the formation of 6,7-dimethyl-8-ribityllumazine by condensation of 5-amino-6-(D-ribitylamino)uracil with 3,4-dihydroxy-2-butanone 4-phosphate. This is the penultimate step in the biosynthesis of riboflavin. The polypeptide is 6,7-dimethyl-8-ribityllumazine synthase (Xanthobacter autotrophicus (strain ATCC BAA-1158 / Py2)).